A 328-amino-acid chain; its full sequence is Biotin synthase (328 aa).

The 228-residue stretch at 48 to 275 (NRIQLSKLLN…KSHVRLTAGR (228 aa)) folds into the Radical SAM core domain. [4Fe-4S] cluster is bound by residues Cys-63, Cys-67, and Cys-70. Residues Cys-107, Cys-138, Cys-198, and Arg-270 each coordinate [2Fe-2S] cluster.

This sequence belongs to the radical SAM superfamily. Biotin synthase family. In terms of assembly, homodimer. It depends on [4Fe-4S] cluster as a cofactor. Requires [2Fe-2S] cluster as cofactor.

The catalysed reaction is (4R,5S)-dethiobiotin + (sulfur carrier)-SH + 2 reduced [2Fe-2S]-[ferredoxin] + 2 S-adenosyl-L-methionine = (sulfur carrier)-H + biotin + 2 5'-deoxyadenosine + 2 L-methionine + 2 oxidized [2Fe-2S]-[ferredoxin]. It functions in the pathway cofactor biosynthesis; biotin biosynthesis; biotin from 7,8-diaminononanoate: step 2/2. In terms of biological role, catalyzes the conversion of dethiobiotin (DTB) to biotin by the insertion of a sulfur atom into dethiobiotin via a radical-based mechanism. The sequence is that of Biotin synthase from Brucella ovis (strain ATCC 25840 / 63/290 / NCTC 10512).